We begin with the raw amino-acid sequence, 45 residues long: Large ribosomal subunit protein bL34c (45 aa).

The protein belongs to the bacterial ribosomal protein bL34 family.

It localises to the plastid. Its subcellular location is the chloroplast. The protein is Large ribosomal subunit protein bL34c of Emiliania huxleyi (Coccolithophore).